The primary structure comprises 353 residues: Lactosylceramide 4-alpha-galactosyltransferase (353 aa).

Residues 1–22 (MSKPPDLLLRLLRGAPRQRVCT) are Cytoplasmic-facing. A helical; Signal-anchor for type II membrane protein transmembrane segment spans residues 23-43 (LFIIGFKFTFFVSIMIYWHVV). At 44-353 (GEPKEKGQLY…TTHEAMKMYL (310 aa)) the chain is on the lumenal side. The N-linked (GlcNAc...) asparagine glycan is linked to Asn-121. The DXD motif motif lies at 192–194 (DTD). Asn-203 carries N-linked (GlcNAc...) asparagine glycosylation.

This sequence belongs to the glycosyltransferase 32 family.

It localises to the golgi apparatus membrane. The catalysed reaction is a beta-D-Gal-(1-&gt;4)-beta-D-Glc-(1&lt;-&gt;1)-Cer(d18:1(4E)) + UDP-alpha-D-galactose = a globoside Gb3Cer (d18:1(4E)) + UDP + H(+). It catalyses the reaction a beta-D-Gal-(1&lt;-&gt;1')-ceramide + UDP-alpha-D-galactose = alpha-D-Gal-(1-&gt;4)-beta-D-Gal-(1&lt;-&gt;1')-Cer + UDP + H(+). It participates in glycolipid biosynthesis. Its function is as follows. Catalyzes the transfer of galactose from UDP-alpha-D-galactose to lactosylceramide/beta-D-galactosyl-(1-&gt;4)-beta-D-glucosyl-(1&lt;-&gt;1)-ceramide(d18:1(4E)) to produce globotriaosylceramide/globoside Gb3Cer (d18:1(4E)). Also able to transfer galactose to galactosylceramide/beta-D-Gal-(1&lt;-&gt;1')-Cer. Globoside Gb3Cer is a glycosphingolipid of the globo serie, one of the major types of neutral root structures of glycosphingolipids, that constitute a significant portion of mammalian cell membranes. In Pan troglodytes (Chimpanzee), this protein is Lactosylceramide 4-alpha-galactosyltransferase (A4GALT).